A 1114-amino-acid chain; its full sequence is Translation initiation factor IF-2 (1114 aa).

2 disordered regions span residues 69–102 (SIKK…PLLI) and 181–507 (INNN…KRRA). A compositionally biased stretch (basic and acidic residues) spans 85 to 96 (SKKETPLKDNSN). A compositionally biased stretch (polar residues) spans 181-198 (INNNVKSNESSQNISSAG). Low complexity predominate over residues 240 to 251 (INPNKQNNKQNI). Residues 252–261 (AFKQTGSNRI) are compositionally biased toward polar residues. Composition is skewed to low complexity over residues 262-278 (GSPN…GLRN), 290-309 (NRQG…GLRN), and 321-337 (NRQG…NRPG). Residues 365 to 375 (NSEKDNKDKNN) show a composition bias toward basic and acidic residues. Positions 376–385 (NAKQNINGPN) are enriched in low complexity. Basic and acidic residues predominate over residues 417-431 (GKTDWDDSAKLEALR). Residues 489–505 (KQFKKKKKETTRQRQKR) are compositionally biased toward basic residues. In terms of domain architecture, tr-type G spans 606-778 (RRPPVITVMG…ILLVSEVEDL (173 aa)). Positions 615 to 622 (GHVDHGKT) are G1. Residue 615-622 (GHVDHGKT) participates in GTP binding. Residues 640 to 644 (GITQH) form a G2 region. The interval 665-668 (DTPG) is G3. GTP is bound by residues 665–669 (DTPGH) and 719–722 (NKID). Positions 719-722 (NKID) are G4. A G5 region spans residues 755–757 (SAI).

The protein belongs to the TRAFAC class translation factor GTPase superfamily. Classic translation factor GTPase family. IF-2 subfamily.

It localises to the cytoplasm. In terms of biological role, one of the essential components for the initiation of protein synthesis. Protects formylmethionyl-tRNA from spontaneous hydrolysis and promotes its binding to the 30S ribosomal subunits. Also involved in the hydrolysis of GTP during the formation of the 70S ribosomal complex. This chain is Translation initiation factor IF-2, found in Prochlorococcus marinus (strain MIT 9301).